A 338-amino-acid polypeptide reads, in one-letter code: Methionyl-tRNA formyltransferase (338 aa).

Residue 110 to 113 participates in (6S)-5,6,7,8-tetrahydrofolate binding; it reads SLLP.

The protein belongs to the Fmt family.

The enzyme catalyses L-methionyl-tRNA(fMet) + (6R)-10-formyltetrahydrofolate = N-formyl-L-methionyl-tRNA(fMet) + (6S)-5,6,7,8-tetrahydrofolate + H(+). Attaches a formyl group to the free amino group of methionyl-tRNA(fMet). The formyl group appears to play a dual role in the initiator identity of N-formylmethionyl-tRNA by promoting its recognition by IF2 and preventing the misappropriation of this tRNA by the elongation apparatus. The chain is Methionyl-tRNA formyltransferase from Synechococcus sp. (strain CC9605).